A 252-amino-acid polypeptide reads, in one-letter code: Hydroxyacylglutathione hydrolase (252 aa).

Positions 54, 56, 58, 59, 111, 128, and 166 each coordinate Zn(2+).

The protein belongs to the metallo-beta-lactamase superfamily. Glyoxalase II family. As to quaternary structure, monomer. Zn(2+) is required as a cofactor.

The enzyme catalyses an S-(2-hydroxyacyl)glutathione + H2O = a 2-hydroxy carboxylate + glutathione + H(+). It participates in secondary metabolite metabolism; methylglyoxal degradation; (R)-lactate from methylglyoxal: step 2/2. In terms of biological role, thiolesterase that catalyzes the hydrolysis of S-D-lactoyl-glutathione to form glutathione and D-lactic acid. In Vibrio vulnificus (strain CMCP6), this protein is Hydroxyacylglutathione hydrolase.